We begin with the raw amino-acid sequence, 303 residues long: Thyrotroph embryonic factor (303 aa).

Disordered regions lie at residues 1–63 (MSDA…KLEE) and 132–176 (ESAS…DPNC). Residue serine 32 is modified to Phosphoserine. Over residues 41 to 61 (KLMENPPREARLDKEKGKEKL) the composition is skewed to basic and acidic residues. The span at 133–160 (SASSSTASPPSSSTAIFQPSETVSSTES) shows a compositional bias: low complexity. The bZIP domain occupies 233–296 (DEKYWTRRKK…GKCKTIVSKY (64 aa)). The tract at residues 235–255 (KYWTRRKKNNVAAKRSRDARR) is basic motif. A leucine-zipper region spans residues 256-263 (LKENQITI).

It belongs to the bZIP family. PAR subfamily. Binds DNA as a homodimer or a heterodimer. Can form a heterodimer with DBP.

The protein resides in the nucleus. Transcription factor that binds to and transactivates the TSHB promoter. Binds to a minimal DNA-binding sequence 5'-[TC][AG][AG]TTA[TC][AG]-3'. This is Thyrotroph embryonic factor (TEF) from Homo sapiens (Human).